The sequence spans 198 residues: Na(+)-translocating NADH-quinone reductase subunit E (198 aa).

A run of 6 helical transmembrane segments spans residues 11-31, 39-59, 77-97, 110-130, 140-160, and 176-196; these read SIFIENMALSFFLGMCTFLAV, FGLGVAVVVVLTIAVPVNNLV, FLNFITFIGVIAALVQILEMV, GIFLPLITVNCAIFGGVSFMV, IVYGFGSGVGWMLAIVALAGI, and LGITFITVGLMALGFMSFSGV.

It belongs to the NqrDE/RnfAE family. In terms of assembly, composed of six subunits; NqrA, NqrB, NqrC, NqrD, NqrE and NqrF.

It is found in the cell inner membrane. It catalyses the reaction a ubiquinone + n Na(+)(in) + NADH + H(+) = a ubiquinol + n Na(+)(out) + NAD(+). Its function is as follows. NQR complex catalyzes the reduction of ubiquinone-1 to ubiquinol by two successive reactions, coupled with the transport of Na(+) ions from the cytoplasm to the periplasm. NqrA to NqrE are probably involved in the second step, the conversion of ubisemiquinone to ubiquinol. The polypeptide is Na(+)-translocating NADH-quinone reductase subunit E (Vibrio campbellii (strain ATCC BAA-1116)).